We begin with the raw amino-acid sequence, 169 residues long: Ribosome maturation factor RimM (169 aa).

The PRC barrel domain maps to 97 to 169 (EDEVYFKDLI…KIVVDWEYDY (73 aa)).

Belongs to the RimM family. Binds ribosomal protein uS19.

It is found in the cytoplasm. An accessory protein needed during the final step in the assembly of 30S ribosomal subunit, possibly for assembly of the head region. Essential for efficient processing of 16S rRNA. May be needed both before and after RbfA during the maturation of 16S rRNA. It has affinity for free ribosomal 30S subunits but not for 70S ribosomes. The chain is Ribosome maturation factor RimM from Francisella tularensis subsp. tularensis (strain WY96-3418).